The primary structure comprises 345 residues: Anthranilate phosphoribosyltransferase (345 aa).

5-phospho-alpha-D-ribose 1-diphosphate is bound by residues Gly-86, 89–90 (GD), Thr-94, 96–99 (NIST), 114–122 (KHGNRNLSS), and Ala-126. Gly-86 is a binding site for anthranilate. Ser-98 contributes to the Mg(2+) binding site. An anthranilate-binding site is contributed by Asn-117. Arg-172 provides a ligand contact to anthranilate. Residues Asp-231 and Glu-232 each coordinate Mg(2+).

It belongs to the anthranilate phosphoribosyltransferase family. In terms of assembly, homodimer. It depends on Mg(2+) as a cofactor.

It carries out the reaction N-(5-phospho-beta-D-ribosyl)anthranilate + diphosphate = 5-phospho-alpha-D-ribose 1-diphosphate + anthranilate. It functions in the pathway amino-acid biosynthesis; L-tryptophan biosynthesis; L-tryptophan from chorismate: step 2/5. In terms of biological role, catalyzes the transfer of the phosphoribosyl group of 5-phosphorylribose-1-pyrophosphate (PRPP) to anthranilate to yield N-(5'-phosphoribosyl)-anthranilate (PRA). This chain is Anthranilate phosphoribosyltransferase, found in Jannaschia sp. (strain CCS1).